The following is a 440-amino-acid chain: Ribosomal protein uS12 methylthiotransferase RimO (440 aa).

Residues 2 to 117 (VKVGFVSLGC…LPNVIKKLYE (116 aa)) form the MTTase N-terminal domain. [4Fe-4S] cluster contacts are provided by Cys-11, Cys-47, Cys-80, Cys-156, Cys-160, and Cys-163. Residues 142 to 371 (ATPKFYAYIK…LNLQRKISLE (230 aa)) form the Radical SAM core domain. Residues 374–440 (RKRISKKYEV…FEYDLVGEVI (67 aa)) form the TRAM domain.

The protein belongs to the methylthiotransferase family. RimO subfamily. [4Fe-4S] cluster serves as cofactor.

It is found in the cytoplasm. The catalysed reaction is L-aspartate(89)-[ribosomal protein uS12]-hydrogen + (sulfur carrier)-SH + AH2 + 2 S-adenosyl-L-methionine = 3-methylsulfanyl-L-aspartate(89)-[ribosomal protein uS12]-hydrogen + (sulfur carrier)-H + 5'-deoxyadenosine + L-methionine + A + S-adenosyl-L-homocysteine + 2 H(+). Its function is as follows. Catalyzes the methylthiolation of an aspartic acid residue of ribosomal protein uS12. The chain is Ribosomal protein uS12 methylthiotransferase RimO from Caldicellulosiruptor saccharolyticus (strain ATCC 43494 / DSM 8903 / Tp8T 6331).